A 247-amino-acid chain; its full sequence is MQVEEYLNDIAEREGTVHLTLIDPASQSPEAAAEIAKAAVAGGTDAILIGGSTGAVGVALDQTLIKIKEQVDVPTILFPGNAGGVSTHADAIFFMSLLNSRDINYIITNQVMGAPVVYKSGIEPISMAYIISEPGGTVGWVGDAKLIPRNKPEIAAAYSLAGKYMGMHYTYLEAGSGADRPITPETIGAVKHVLGDNKLIVGGGIRDGKTAKICADAGADMIVTGTIVEETDDVRKKIEEIVSAIKK.

Mg(2+) is bound by residues Asp-23 and Ser-52. Residues 171–177, 203–204, and 225–226 contribute to the sn-glycerol 1-phosphate site; these read YLEAGSG, GG, and GT.

Belongs to the GGGP/HepGP synthase family. Group II subfamily. The cofactor is Mg(2+).

The protein localises to the cytoplasm. The enzyme catalyses sn-glycerol 1-phosphate + (2E,6E,10E)-geranylgeranyl diphosphate = sn-3-O-(geranylgeranyl)glycerol 1-phosphate + diphosphate. It participates in membrane lipid metabolism; glycerophospholipid metabolism. In terms of biological role, prenyltransferase that catalyzes the transfer of the geranylgeranyl moiety of geranylgeranyl diphosphate (GGPP) to the C3 hydroxyl of sn-glycerol-1-phosphate (G1P). This reaction is the first ether-bond-formation step in the biosynthesis of archaeal membrane lipids. This chain is Geranylgeranylglyceryl phosphate synthase, found in Methanococcoides burtonii (strain DSM 6242 / NBRC 107633 / OCM 468 / ACE-M).